Here is a 159-residue protein sequence, read N- to C-terminus: Histone H1 (159 aa).

3 disordered regions span residues 1 to 31 (MAEK…ITEL), 80 to 99 (KGAE…KKEK), and 132 to 159 (AAKK…KKKS). The segment covering 10 to 22 (VTTKKPAATHRRR) has biased composition (basic residues). In terms of domain architecture, H15 spans 12 to 102 (TKKPAATHRR…GEGKKEKEKA (91 aa)). A compositionally biased stretch (gly residues) spans 84-93 (CAGGQGTGVG). The segment covering 134–148 (KKVKAAPKKAKKPVK) has biased composition (basic residues). Positions 149-159 (KTTEKKEKKKS) are enriched in basic and acidic residues.

The protein belongs to the histone H1/H5 family.

The protein localises to the nucleus. The protein resides in the chromosome. In terms of biological role, histones H1 are necessary for the condensation of nucleosome chains into higher-order structures. The polypeptide is Histone H1 (Psammechinus miliaris (Green sea urchin)).